A 169-amino-acid chain; its full sequence is S-ribosylhomocysteine lyase (169 aa).

3 residues coordinate Fe cation: His-54, His-58, and Cys-128.

Belongs to the LuxS family. In terms of assembly, homodimer. The cofactor is Fe cation.

It carries out the reaction S-(5-deoxy-D-ribos-5-yl)-L-homocysteine = (S)-4,5-dihydroxypentane-2,3-dione + L-homocysteine. In terms of biological role, involved in the synthesis of autoinducer 2 (AI-2) which is secreted by bacteria and is used to communicate both the cell density and the metabolic potential of the environment. The regulation of gene expression in response to changes in cell density is called quorum sensing. Catalyzes the transformation of S-ribosylhomocysteine (RHC) to homocysteine (HC) and 4,5-dihydroxy-2,3-pentadione (DPD). The polypeptide is S-ribosylhomocysteine lyase (Sulfurovum sp. (strain NBC37-1)).